The chain runs to 113 residues: CRISPR-associated endoribonuclease Cas2 (113 aa).

Aspartate 33 lines the Mg(2+) pocket.

This sequence belongs to the CRISPR-associated endoribonuclease Cas2 protein family. Homodimer, forms a heterotetramer with a Cas1 homodimer. It depends on Mg(2+) as a cofactor.

In terms of biological role, CRISPR (clustered regularly interspaced short palindromic repeat), is an adaptive immune system that provides protection against mobile genetic elements (viruses, transposable elements and conjugative plasmids). CRISPR clusters contain sequences complementary to antecedent mobile elements and target invading nucleic acids. CRISPR clusters are transcribed and processed into CRISPR RNA (crRNA). Functions as a ssRNA-specific endoribonuclease. Involved in the integration of spacer DNA into the CRISPR cassette. The type III-A Csm effector complex binds crRNA and acts as a crRNA-guided RNase, DNase and cyclic oligoadenylate synthase; binding of target RNA cognate to the crRNA is required for all activities. The sequence is that of CRISPR-associated endoribonuclease Cas2 from Mycobacterium tuberculosis (strain CDC 1551 / Oshkosh).